The following is a 323-amino-acid chain: Probable inactive poly [ADP-ribose] polymerase SRO2 (323 aa).

The region spanning 31–257 is the PARP catalytic domain; that stretch reads SSVSHAGSSF…FASRPSSPWV (227 aa). Residues 250–321 enclose the RST domain; that stretch reads SRPSSPWVSF…IKNHKNRNKV (72 aa).

As to quaternary structure, interacts with STO.

It localises to the nucleus. Its function is as follows. Probable inactive ADP-ribosyltransferase that may be involved in stress and developmental responses. This chain is Probable inactive poly [ADP-ribose] polymerase SRO2 (SRO2), found in Arabidopsis thaliana (Mouse-ear cress).